We begin with the raw amino-acid sequence, 357 residues long: DNA replication and repair protein RecF (357 aa).

30–37 lines the ATP pocket; that stretch reads GPNGSGKT.

This sequence belongs to the RecF family.

It localises to the cytoplasm. Functionally, the RecF protein is involved in DNA metabolism; it is required for DNA replication and normal SOS inducibility. RecF binds preferentially to single-stranded, linear DNA. It also seems to bind ATP. The sequence is that of DNA replication and repair protein RecF from Vibrio campbellii (strain ATCC BAA-1116).